A 329-amino-acid chain; its full sequence is Arylacetonitrilase (329 aa).

A CN hydrolase domain is found at 6-279 (VRVAVTQAEP…EGIVYANLDM (274 aa)). E46 (proton acceptor) is an active-site residue. K126 is an active-site residue. The active-site Nucleophile is the C161.

Belongs to the carbon-nitrogen hydrolase superfamily. Nitrilase family.

It carries out the reaction a nitrile + 2 H2O = a carboxylate + NH4(+). It catalyses the reaction 4-chlorophenylacetonitrile + 2 H2O = 4-chlorophenylacetate + NH4(+). In terms of biological role, nitrilase that hydrolyzes preferentially phenylacetonitrile and heteroaromatic nitriles, but has significantly lower activity for (R,S)-mandelonitrile. Also acts on dinitriles like phenylenediacetonitriles (PDAs) 1,2-PDA, 1,3-PDA, and 1,4-PDA, and cyanophenyl acetonitriles (CPAs) 2-CPA and 4-CPA. The sequence is that of Arylacetonitrilase from Hypocrea virens (strain Gv29-8 / FGSC 10586) (Gliocladium virens).